The following is a 79-amino-acid chain: UPF0154 protein SUB0399 (79 aa).

The chain crosses the membrane as a helical span at residues 4 to 24 (AIWILLIVLALIGGLFGGVFI).

This sequence belongs to the UPF0154 family.

The protein localises to the cell membrane. This Streptococcus uberis (strain ATCC BAA-854 / 0140J) protein is UPF0154 protein SUB0399.